Reading from the N-terminus, the 640-residue chain is Probable potassium transport system protein Kup 3 (640 aa).

Residues 1-15 (MTVDAAATPAEAPAT) show a composition bias toward low complexity. The interval 1–20 (MTVDAAATPAEAPATNGHGD) is disordered. 12 consecutive transmembrane segments (helical) span residues 30–50 (LTLG…LYAL), 71–91 (VISL…VVIL), 117–137 (ASII…DAVI), 155–175 (AAFD…LFAV), 183–203 (VAAF…IAAF), 224–244 (FMLH…LAVT), 265–285 (WLFV…ALII), 294–314 (PFFL…ATVA), 363–383 (LLLA…ALAS), 385–405 (YGIS…VVIW), 410–430 (WSPL…LTFL), and 437–457 (VLEG…LMYT).

This sequence belongs to the HAK/KUP transporter (TC 2.A.72) family.

It is found in the cell inner membrane. The enzyme catalyses K(+)(in) + H(+)(in) = K(+)(out) + H(+)(out). Transport of potassium into the cell. Likely operates as a K(+):H(+) symporter. The chain is Probable potassium transport system protein Kup 3 from Bradyrhizobium sp. (strain BTAi1 / ATCC BAA-1182).